The sequence spans 327 residues: GTPase Obg (327 aa).

Positions 2 to 160 constitute an Obg domain; it reads HLFKDSLNLI…LNLRLELSLI (159 aa). The region spanning 161–326 is the OBG-type G domain; that stretch reads ADVGLVGLPN…LVSEFFSLAK (166 aa). GTP contacts are provided by residues 167–174, 192–196, 213–216, 280–283, and 307–309; these read GLPNAGKS, FTTKI, DLPG, SKLD, and SIY. Ser-174 and Thr-194 together coordinate Mg(2+).

The protein belongs to the TRAFAC class OBG-HflX-like GTPase superfamily. OBG GTPase family. As to quaternary structure, monomer. It depends on Mg(2+) as a cofactor.

The protein localises to the cytoplasm. Functionally, an essential GTPase which binds GTP, GDP and possibly (p)ppGpp with moderate affinity, with high nucleotide exchange rates and a fairly low GTP hydrolysis rate. Plays a role in control of the cell cycle, stress response, ribosome biogenesis and in those bacteria that undergo differentiation, in morphogenesis control. The protein is GTPase Obg of Borrelia recurrentis (strain A1).